The sequence spans 353 residues: Peptide chain release factor 1 (353 aa).

Gln230 carries the N5-methylglutamine modification.

Belongs to the prokaryotic/mitochondrial release factor family. Post-translationally, methylated by PrmC. Methylation increases the termination efficiency of RF1.

It is found in the cytoplasm. Peptide chain release factor 1 directs the termination of translation in response to the peptide chain termination codons UAG and UAA. In Leptospira biflexa serovar Patoc (strain Patoc 1 / ATCC 23582 / Paris), this protein is Peptide chain release factor 1.